Here is a 69-residue protein sequence, read N- to C-terminus: Large ribosomal subunit protein uL29 (69 aa).

This sequence belongs to the universal ribosomal protein uL29 family.

The sequence is that of Large ribosomal subunit protein uL29 from Sulfolobus acidocaldarius (strain ATCC 33909 / DSM 639 / JCM 8929 / NBRC 15157 / NCIMB 11770).